A 371-amino-acid polypeptide reads, in one-letter code: Protease PrtS (371 aa).

H169 serves as a coordination point for Zn(2+). Residue E170 is part of the active site. Zn(2+) contacts are provided by H173 and E193. H273 (proton donor) is an active-site residue. Residues 352-371 (KEEDKDKGKDEGKDKAETKV) form a disordered region.

It belongs to the peptidase M4 family. It depends on Zn(2+) as a cofactor.

Its subcellular location is the secreted. With respect to regulation, inhibited by 8 mM 1,10-phenanthroline, but not by EDTA or PMSF. Its function is as follows. Metalloprotease involved in the inhibition of insect antibacterial peptides. Reduces the antibacterial activity of G.mellonella hemolymph by 50%. Reduces the antibacterial activity of cecropin A by 80% and completely inhibits cecropin B. The polypeptide is Protease PrtS (Photorhabdus sp. (strain Az29)).